Reading from the N-terminus, the 360-residue chain is Peptide chain release factor 1 (360 aa).

At Q237 the chain carries N5-methylglutamine.

This sequence belongs to the prokaryotic/mitochondrial release factor family. In terms of processing, methylated by PrmC. Methylation increases the termination efficiency of RF1.

It is found in the cytoplasm. Peptide chain release factor 1 directs the termination of translation in response to the peptide chain termination codons UAG and UAA. The chain is Peptide chain release factor 1 from Pseudomonas fluorescens (strain ATCC BAA-477 / NRRL B-23932 / Pf-5).